Here is a 248-residue protein sequence, read N- to C-terminus: Aspartate/glutamate leucyltransferase (248 aa).

This sequence belongs to the R-transferase family. Bpt subfamily.

The protein localises to the cytoplasm. It carries out the reaction N-terminal L-glutamyl-[protein] + L-leucyl-tRNA(Leu) = N-terminal L-leucyl-L-glutamyl-[protein] + tRNA(Leu) + H(+). It catalyses the reaction N-terminal L-aspartyl-[protein] + L-leucyl-tRNA(Leu) = N-terminal L-leucyl-L-aspartyl-[protein] + tRNA(Leu) + H(+). Its function is as follows. Functions in the N-end rule pathway of protein degradation where it conjugates Leu from its aminoacyl-tRNA to the N-termini of proteins containing an N-terminal aspartate or glutamate. This is Aspartate/glutamate leucyltransferase from Methylorubrum extorquens (strain PA1) (Methylobacterium extorquens).